Consider the following 547-residue polypeptide: ATP-dependent RNA helicase ROK1 (547 aa).

Positions Asp-111–Cys-139 match the Q motif motif. One can recognise a Helicase ATP-binding domain in the interval Ile-142–Arg-324. Ala-155–Thr-162 lines the ATP pocket. The DEAD box motif lies at Asp-272–Asp-275. Residues Thr-336–Ala-498 form the Helicase C-terminal domain. A disordered region spans residues Arg-511–Glu-547. A compositionally biased stretch (basic residues) spans Asn-527–Glu-547.

The protein belongs to the DEAD box helicase family. DDX52/ROK1 subfamily. Interacts with the U3 snoRNA and is associated with the 90S and 40S pre-ribosomes.

The protein resides in the nucleus. It localises to the nucleolus. The enzyme catalyses ATP + H2O = ADP + phosphate + H(+). Functionally, ATP-dependent RNA helicase involved in 40S ribosomal subunit biogenesis. Required for the processing and cleavage of 35S pre-rRNA at sites A0, A1, and A2, leading to mature 18S rRNA. The polypeptide is ATP-dependent RNA helicase ROK1 (ROK1) (Yarrowia lipolytica (strain CLIB 122 / E 150) (Yeast)).